The following is a 417-amino-acid chain: Acid phosphatase (417 aa).

The first 19 residues, 1–19 (MFTKQSLVTLLGGLSLAVA), serve as a signal peptide directing secretion. Residues asparagine 122, asparagine 187, and asparagine 209 are each glycosylated (N-linked (GlcNAc...) asparagine). The active-site Proton donor is aspartate 216. Residues asparagine 218, asparagine 333, and asparagine 383 are each glycosylated (N-linked (GlcNAc...) asparagine).

Post-translationally, the N-terminus is blocked.

Its subcellular location is the secreted. The catalysed reaction is a phosphate monoester + H2O = an alcohol + phosphate. The sequence is that of Acid phosphatase (phoA) from Aspergillus niger.